Here is a 282-residue protein sequence, read N- to C-terminus: HTH-type transcriptional activator RhaR (282 aa).

The 99-residue stretch at 179–277 (DKLITALANS…GMTPSQWRHL (99 aa)) folds into the HTH araC/xylS-type domain. DNA-binding regions (H-T-H motif) lie at residues 196–217 (DAFC…RAQT) and 244–267 (ISEI…TRET).

Binds DNA as a dimer.

The protein localises to the cytoplasm. Activates expression of the rhaSR operon in response to L-rhamnose. This chain is HTH-type transcriptional activator RhaR, found in Salmonella typhimurium (strain LT2 / SGSC1412 / ATCC 700720).